Reading from the N-terminus, the 330-residue chain is Carbonic anhydrase 1 (330 aa).

The chloroplast transit peptide-like stretch occupies residues Met1–Ala109.

It belongs to the beta-class carbonic anhydrase family. As to quaternary structure, homohexamer.

Its subcellular location is the cytoplasm. The enzyme catalyses hydrogencarbonate + H(+) = CO2 + H2O. Functionally, reversible hydration of carbon dioxide. The polypeptide is Carbonic anhydrase 1 (Flaveria linearis (Narrowleaf yellowtops)).